The following is a 270-amino-acid chain: Elongation factor Ts (270 aa).

The involved in Mg(2+) ion dislocation from EF-Tu stretch occupies residues 77–80; it reads TDFV.

This sequence belongs to the EF-Ts family.

Its subcellular location is the cytoplasm. Its function is as follows. Associates with the EF-Tu.GDP complex and induces the exchange of GDP to GTP. It remains bound to the aminoacyl-tRNA.EF-Tu.GTP complex up to the GTP hydrolysis stage on the ribosome. The protein is Elongation factor Ts of Nocardioides sp. (strain ATCC BAA-499 / JS614).